A 606-amino-acid chain; its full sequence is 1-deoxy-D-xylulose-5-phosphate synthase (606 aa).

Thiamine diphosphate-binding positions include His63 and Gly104–Ser106. Mg(2+) is bound at residue Asp137. Thiamine diphosphate-binding positions include Gly138 to Ser139, Asn166, Tyr273, and Glu354. Residue Asn166 coordinates Mg(2+).

This sequence belongs to the transketolase family. DXPS subfamily. In terms of assembly, homodimer. The cofactor is Mg(2+). Thiamine diphosphate serves as cofactor.

The catalysed reaction is D-glyceraldehyde 3-phosphate + pyruvate + H(+) = 1-deoxy-D-xylulose 5-phosphate + CO2. Its pathway is metabolic intermediate biosynthesis; 1-deoxy-D-xylulose 5-phosphate biosynthesis; 1-deoxy-D-xylulose 5-phosphate from D-glyceraldehyde 3-phosphate and pyruvate: step 1/1. Its function is as follows. Catalyzes the acyloin condensation reaction between C atoms 2 and 3 of pyruvate and glyceraldehyde 3-phosphate to yield 1-deoxy-D-xylulose-5-phosphate (DXP). This is 1-deoxy-D-xylulose-5-phosphate synthase from Sulfurimonas denitrificans (strain ATCC 33889 / DSM 1251) (Thiomicrospira denitrificans (strain ATCC 33889 / DSM 1251)).